A 272-amino-acid chain; its full sequence is Probable proteasome subunit alpha type-6 (272 aa).

The span at 243 to 261 shows a compositional bias: low complexity; the sequence is AARASRAAAEEPQAPTAEA. The tract at residues 243–272 is disordered; it reads AARASRAAAEEPQAPTAEAILDSADAMETD.

Belongs to the peptidase T1A family. The 26S proteasome consists of a 20S proteasome core and two 19S regulatory subunits. The 20S proteasome core is composed of 28 subunits that are arranged in four stacked rings, resulting in a barrel-shaped structure. The two end rings are each formed by seven alpha subunits, and the two central rings are each formed by seven beta subunits. The catalytic chamber with the active sites is on the inside of the barrel.

The protein resides in the cytoplasm. It localises to the nucleus. The proteasome is a multicatalytic proteinase complex which is characterized by its ability to cleave peptides with Arg, Phe, Tyr, Leu, and Glu adjacent to the leaving group at neutral or slightly basic pH. The proteasome has an ATP-dependent proteolytic activity. The polypeptide is Probable proteasome subunit alpha type-6 (Schizosaccharomyces pombe (strain 972 / ATCC 24843) (Fission yeast)).